A 144-amino-acid chain; its full sequence is Probable 4-amino-4-deoxy-L-arabinose-phosphoundecaprenol flippase subunit ArnF (144 aa).

At 1-6 (MTHRRA) the chain is on the cytoplasmic side. The chain crosses the membrane as a helical span at residues 7–24 (TLCAMASVALVSAAQLGM). The Periplasmic portion of the chain corresponds to 25–56 (RWSMSRLPSPVQWLEMQEHAQLDLSALRVVCA). Residues 57 to 77 (SITAYALSMLFWLLALRVLPL) form a helical membrane-spanning segment. Residues 78 to 80 (SRA) are Cytoplasmic-facing. Residues 81-101 (YSLLSISYALVYTLAATLPFF) form a helical membrane-spanning segment. The Periplasmic portion of the chain corresponds to 102–104 (HET). Residues 105-125 (FTVSKTVGVSLIVAGVLTINL) form a helical membrane-spanning segment. Over 126–144 (RRLPRPSPQDLSHENQRFR) the chain is Cytoplasmic.

Belongs to the ArnF family. In terms of assembly, heterodimer of ArnE and ArnF.

The protein localises to the cell inner membrane. It participates in bacterial outer membrane biogenesis; lipopolysaccharide biosynthesis. Translocates 4-amino-4-deoxy-L-arabinose-phosphoundecaprenol (alpha-L-Ara4N-phosphoundecaprenol) from the cytoplasmic to the periplasmic side of the inner membrane. The chain is Probable 4-amino-4-deoxy-L-arabinose-phosphoundecaprenol flippase subunit ArnF from Pseudomonas syringae pv. syringae (strain B728a).